A 282-amino-acid chain; its full sequence is Large ribosomal subunit protein uL2 (282 aa).

2 disordered regions span residues 31 to 54 (KRLTKPVRKSGGRNAHGKVTTRHI) and 223 to 282 (LAMN…NTQR). Composition is skewed to basic residues over residues 34 to 54 (TKPVRKSGGRNAHGKVTTRHI) and 270 to 282 (VTRRRPGVRNTQR).

This sequence belongs to the universal ribosomal protein uL2 family. In terms of assembly, part of the 50S ribosomal subunit. Forms a bridge to the 30S subunit in the 70S ribosome.

Its function is as follows. One of the primary rRNA binding proteins. Required for association of the 30S and 50S subunits to form the 70S ribosome, for tRNA binding and peptide bond formation. It has been suggested to have peptidyltransferase activity; this is somewhat controversial. Makes several contacts with the 16S rRNA in the 70S ribosome. In Anaeromyxobacter dehalogenans (strain 2CP-1 / ATCC BAA-258), this protein is Large ribosomal subunit protein uL2.